The following is a 428-amino-acid chain: Cytochrome c biogenesis protein CcsB (428 aa).

Helical transmembrane passes span 14–34, 72–92, and 162–182; these read LKFA…GTFI, SLWF…CSFR, and IGPL…AYGS.

It belongs to the Ccs1/CcsB family. May interact with CcsA.

Its subcellular location is the cellular thylakoid membrane. Its function is as follows. Required during biogenesis of c-type cytochromes (cytochrome c6 and cytochrome f) at the step of heme attachment. In Prochlorococcus marinus (strain MIT 9301), this protein is Cytochrome c biogenesis protein CcsB.